The following is a 251-amino-acid chain: Triosephosphate isomerase (251 aa).

Substrate is bound at residue 9 to 11 (NWK). Histidine 95 (electrophile) is an active-site residue. Glutamate 167 acts as the Proton acceptor in catalysis. Substrate is bound by residues glycine 173, serine 213, and 234–235 (GG).

This sequence belongs to the triosephosphate isomerase family. Homodimer.

It is found in the cytoplasm. It carries out the reaction D-glyceraldehyde 3-phosphate = dihydroxyacetone phosphate. Its pathway is carbohydrate biosynthesis; gluconeogenesis. It participates in carbohydrate degradation; glycolysis; D-glyceraldehyde 3-phosphate from glycerone phosphate: step 1/1. In terms of biological role, involved in the gluconeogenesis. Catalyzes stereospecifically the conversion of dihydroxyacetone phosphate (DHAP) to D-glyceraldehyde-3-phosphate (G3P). This is Triosephosphate isomerase from Citrifermentans bemidjiense (strain ATCC BAA-1014 / DSM 16622 / JCM 12645 / Bem) (Geobacter bemidjiensis).